Reading from the N-terminus, the 403-residue chain is S-adenosylmethionine synthase (403 aa).

Residue His16 participates in ATP binding. Asp18 is a binding site for Mg(2+). Residue Glu44 coordinates K(+). Residues Glu57 and Gln100 each contribute to the L-methionine site. Residues 100-110 (QSSDIAQGVDR) form a flexible loop region. Residues 165-167 (DAK), Asp242, 248-249 (RK), Ala265, and Lys269 contribute to the ATP site. Residue Asp242 coordinates L-methionine. Lys273 serves as a coordination point for L-methionine.

It belongs to the AdoMet synthase family. In terms of assembly, homotetramer; dimer of dimers. Mg(2+) is required as a cofactor. Requires K(+) as cofactor.

Its subcellular location is the cytoplasm. The catalysed reaction is L-methionine + ATP + H2O = S-adenosyl-L-methionine + phosphate + diphosphate. It participates in amino-acid biosynthesis; S-adenosyl-L-methionine biosynthesis; S-adenosyl-L-methionine from L-methionine: step 1/1. Functionally, catalyzes the formation of S-adenosylmethionine (AdoMet) from methionine and ATP. The overall synthetic reaction is composed of two sequential steps, AdoMet formation and the subsequent tripolyphosphate hydrolysis which occurs prior to release of AdoMet from the enzyme. The protein is S-adenosylmethionine synthase of Nitrosococcus oceani (strain ATCC 19707 / BCRC 17464 / JCM 30415 / NCIMB 11848 / C-107).